The chain runs to 82 residues: MKTLLLTLVVVVTIVCLDLGYTLKCNQHIPPFYKTCAAGKNLCYKIFMVAAPKVPVKRGCIDVCPKSSDLVKYVCCNTDRCN.

A signal peptide spans 1-22 (MKTLLLTLVVVVTIVCLDLGYT). Disulfide bonds link C25–C43, C36–C60, C64–C75, and C76–C81.

Belongs to the three-finger toxin family. Short-chain subfamily. Type IA cytotoxin sub-subfamily. In terms of assembly, monomer in solution; Homodimer and oligomer in the presence of negatively charged lipids forming a pore with a size ranging between 20 and 30 Angstroms. Expressed by the venom gland.

The protein localises to the secreted. It is found in the target cell membrane. In terms of biological role, shows cytolytic activity on many different cells by forming pore in lipid membranes. In vivo, increases heart rate or kills the animal by cardiac arrest. In addition, it binds to heparin with high affinity, interacts with Kv channel-interacting protein 1 (KCNIP1) in a calcium-independent manner, and binds to integrin alpha-V/beta-3 (ITGAV/ITGB3) with moderate affinity. This chain is Cytotoxin 10, found in Naja atra (Chinese cobra).